The chain runs to 338 residues: Ketol-acid reductoisomerase (NADP(+)) (338 aa).

Positions 1–181 (MKVFYDKDAD…GGGRAGIIET (181 aa)) constitute a KARI N-terminal Rossmann domain. Residues 24 to 27 (YGSQ), Arg-47, and Ser-52 contribute to the NADP(+) site. His-107 is an active-site residue. An NADP(+)-binding site is contributed by Gly-133. A KARI C-terminal knotted domain is found at 182 to 327 (NFREETETDL…AKLRAMMPWI (146 aa)). Mg(2+) contacts are provided by Asp-190, Glu-194, Glu-226, and Glu-230. Ser-251 contacts substrate.

The protein belongs to the ketol-acid reductoisomerase family. Mg(2+) is required as a cofactor.

The catalysed reaction is (2R)-2,3-dihydroxy-3-methylbutanoate + NADP(+) = (2S)-2-acetolactate + NADPH + H(+). The enzyme catalyses (2R,3R)-2,3-dihydroxy-3-methylpentanoate + NADP(+) = (S)-2-ethyl-2-hydroxy-3-oxobutanoate + NADPH + H(+). It participates in amino-acid biosynthesis; L-isoleucine biosynthesis; L-isoleucine from 2-oxobutanoate: step 2/4. The protein operates within amino-acid biosynthesis; L-valine biosynthesis; L-valine from pyruvate: step 2/4. In terms of biological role, involved in the biosynthesis of branched-chain amino acids (BCAA). Catalyzes an alkyl-migration followed by a ketol-acid reduction of (S)-2-acetolactate (S2AL) to yield (R)-2,3-dihydroxy-isovalerate. In the isomerase reaction, S2AL is rearranged via a Mg-dependent methyl migration to produce 3-hydroxy-3-methyl-2-ketobutyrate (HMKB). In the reductase reaction, this 2-ketoacid undergoes a metal-dependent reduction by NADPH to yield (R)-2,3-dihydroxy-isovalerate. The protein is Ketol-acid reductoisomerase (NADP(+)) of Cupriavidus necator (strain ATCC 17699 / DSM 428 / KCTC 22496 / NCIMB 10442 / H16 / Stanier 337) (Ralstonia eutropha).